The chain runs to 2531 residues: Talin (2531 aa).

Residues arginine 87 to lysine 401 enclose the FERM domain. Residues glycine 598–proline 621 are interaction with VIN1. The I/LWEQ domain occupies threonine 2287–histidine 2526. The interval alanine 2466–glutamate 2485 is disordered.

In terms of assembly, interacts with VIN1 (vinculin); the interaction facilitates VIN1 binding to F-actin.

It localises to the cytoplasm. Its subcellular location is the cytoskeleton. The protein localises to the cell cortex. Probably involved in connections of major cytoskeletal structures to the plasma membrane. In Oscarella pearsei (Sponge), this protein is Talin.